Consider the following 30-residue polypeptide: Protein Tat (30 aa).

Residues 1 to 30 are disordered; the sequence is PLPTTRGNPTGPKESKKEVESKTETDPFAW. Positions 6–8 match the Cell attachment site motif; it reads RGN. Basic and acidic residues predominate over residues 13–30; it reads KESKKEVESKTETDPFAW.

The protein belongs to the lentiviruses Tat family. As to quaternary structure, interacts with host CCNT1. Associates with the P-TEFb complex composed at least of Tat, P-TEFb (CDK9 and CCNT1), TAR RNA, RNA Pol II. Recruits the HATs CREBBP, TAF1/TFIID, EP300, PCAF and GCN5L2. Interacts with host KAT5/Tip60; this interaction targets the latter to degradation. Interacts with the host deacetylase SIRT1. Interacts with host capping enzyme RNGTT; this interaction stimulates RNGTT. Binds to host KDR, and to the host integrins ITGAV/ITGB3 and ITGA5/ITGB1. Interacts with host KPNB1/importin beta-1 without previous binding to KPNA1/importin alpha-1. Interacts with EIF2AK2. Interacts with host nucleosome assembly protein NAP1L1; this interaction may be required for the transport of Tat within the nucleus, since the two proteins interact at the nuclear rim. Interacts with host C1QBP/SF2P32; this interaction involves lysine-acetylated Tat. Interacts with the host chemokine receptors CCR2, CCR3 and CXCR4. Interacts with host DPP4/CD26; this interaction may trigger an anti-proliferative effect. Interacts with host LDLR. Interacts with the host extracellular matrix metalloproteinase MMP1. Interacts with host PRMT6; this interaction mediates Tat's methylation. Interacts with, and is ubiquitinated by MDM2/Hdm2. Interacts with host PSMC3 and HTATIP2. Interacts with STAB1; this interaction may overcome SATB1-mediated repression of IL2 and IL2RA (interleukin) in T cells by binding to the same domain than HDAC1. Interacts (when acetylated on Lys-50 and Lys-51) with human CDK13, thereby increasing HIV-1 mRNA splicing and promoting the production of the doubly spliced HIV-1 protein Nef. Acetylation by EP300, CREBBP, GCN5L2/GCN5 and PCAF regulates the transactivation activity of Tat. EP300-mediated acetylation of Lys-50 promotes dissociation of Tat from the TAR RNA through the competitive binding to PCAF's bromodomain. In addition, the non-acetylated Tat's N-terminus can also interact with PCAF. PCAF-mediated acetylation of Lys-28 enhances Tat's binding to CCNT1. Lys-50 is deacetylated by SIRT1. Post-translationally, phosphorylated by EIF2AK2 on serine and threonine residues adjacent to the basic region important for TAR RNA binding and function. Phosphorylation of Tat by EIF2AK2 is dependent on the prior activation of EIF2AK2 by dsRNA. In terms of processing, asymmetrical arginine methylation by host PRMT6 seems to diminish the transactivation capacity of Tat and affects the interaction with host CCNT1. Polyubiquitination by MDM2 does not target Tat to degradation, but activates its transactivation function and fosters interaction with CCNT1 and TAR RNA.

It is found in the host nucleus. Its subcellular location is the host nucleolus. It localises to the host cytoplasm. The protein resides in the secreted. Its function is as follows. Transcriptional activator that increases RNA Pol II processivity, thereby increasing the level of full-length viral transcripts. Recognizes a hairpin structure at the 5'-LTR of the nascent viral mRNAs referred to as the transactivation responsive RNA element (TAR) and recruits the cyclin T1-CDK9 complex (P-TEFb complex) that will in turn hyperphosphorylate the RNA polymerase II to allow efficient elongation. The CDK9 component of P-TEFb and other Tat-activated kinases hyperphosphorylate the C-terminus of RNA Pol II that becomes stabilized and much more processive. Other factors such as HTATSF1/Tat-SF1, SUPT5H/SPT5, and HTATIP2 are also important for Tat's function. Besides its effect on RNA Pol II processivity, Tat induces chromatin remodeling of proviral genes by recruiting the histone acetyltransferases (HATs) CREBBP, EP300 and PCAF to the chromatin. This also contributes to the increase in proviral transcription rate, especially when the provirus integrates in transcriptionally silent region of the host genome. To ensure maximal activation of the LTR, Tat mediates nuclear translocation of NF-kappa-B by interacting with host RELA. Through its interaction with host TBP, Tat may also modulate transcription initiation. Tat can reactivate a latently infected cell by penetrating in it and transactivating its LTR promoter. In the cytoplasm, Tat is thought to act as a translational activator of HIV-1 mRNAs. In terms of biological role, extracellular circulating Tat can be endocytosed by surrounding uninfected cells via the binding to several surface receptors such as CD26, CXCR4, heparan sulfate proteoglycans (HSPG) or LDLR. Neurons are rarely infected, but they internalize Tat via their LDLR. Endosomal low pH allows Tat to cross the endosome membrane to enter the cytosol and eventually further translocate into the nucleus, thereby inducing severe cell dysfunctions ranging from cell activation to cell death. Through its interaction with nuclear HATs, Tat is potentially able to control the acetylation-dependent cellular gene expression. Tat seems to inhibit the HAT activity of KAT5/Tip60 and TAF1, and consequently modify the expression of specific cellular genes. Modulates the expression of many cellular genes involved in cell survival, proliferation or in coding for cytokines (such as IL10) or cytokine receptors. May be involved in the derepression of host interleukin IL2 expression. Mediates the activation of cyclin-dependent kinases and dysregulation of microtubule network. Tat plays a role in T-cell and neurons apoptosis. Tat induced neurotoxicity and apoptosis probably contribute to neuroAIDS. Host extracellular matrix metalloproteinase MMP1 cleaves Tat and decreases Tat's mediated neurotoxicity. Circulating Tat also acts as a chemokine-like and/or growth factor-like molecule that binds to specific receptors on the surface of the cells, affecting many cellular pathways. In the vascular system, Tat binds to ITGAV/ITGB3 and ITGA5/ITGB1 integrins dimers at the surface of endothelial cells and competes with bFGF for heparin-binding sites, leading to an excess of soluble bFGF. Binds to KDR/VEGFR-2. All these Tat-mediated effects enhance angiogenesis in Kaposi's sarcoma lesions. The polypeptide is Protein Tat (Human immunodeficiency virus type 1 group M subtype A (isolate Z321) (HIV-1)).